A 456-amino-acid polypeptide reads, in one-letter code: Bifunctional protein GlmU (456 aa).

Positions 1–229 are pyrophosphorylase; that stretch reads MYKCALILAA…FEEILGVNSR (229 aa). UDP-N-acetyl-alpha-D-glucosamine is bound by residues 8 to 11, K22, Q73, and 78 to 79; these read LAAG and GT. D103 lines the Mg(2+) pocket. UDP-N-acetyl-alpha-D-glucosamine-binding residues include G140, E155, N170, and N227. N227 contributes to the Mg(2+) binding site. A linker region spans residues 230-250; the sequence is LQLCQVGKVMQKRINEKHMEN. Residues 251–456 are N-acetyltransferase; sequence GSTLIDPDNT…GWVDKKGLLK (206 aa). UDP-N-acetyl-alpha-D-glucosamine is bound by residues R332 and K350. H362 functions as the Proton acceptor in the catalytic mechanism. UDP-N-acetyl-alpha-D-glucosamine is bound by residues Y365 and N376. Acetyl-CoA-binding positions include 385-386, A422, and R439; that span reads NY.

It in the N-terminal section; belongs to the N-acetylglucosamine-1-phosphate uridyltransferase family. In the C-terminal section; belongs to the transferase hexapeptide repeat family. In terms of assembly, homotrimer. Mg(2+) serves as cofactor.

It is found in the cytoplasm. It carries out the reaction alpha-D-glucosamine 1-phosphate + acetyl-CoA = N-acetyl-alpha-D-glucosamine 1-phosphate + CoA + H(+). It catalyses the reaction N-acetyl-alpha-D-glucosamine 1-phosphate + UTP + H(+) = UDP-N-acetyl-alpha-D-glucosamine + diphosphate. It functions in the pathway nucleotide-sugar biosynthesis; UDP-N-acetyl-alpha-D-glucosamine biosynthesis; N-acetyl-alpha-D-glucosamine 1-phosphate from alpha-D-glucosamine 6-phosphate (route II): step 2/2. Its pathway is nucleotide-sugar biosynthesis; UDP-N-acetyl-alpha-D-glucosamine biosynthesis; UDP-N-acetyl-alpha-D-glucosamine from N-acetyl-alpha-D-glucosamine 1-phosphate: step 1/1. It participates in bacterial outer membrane biogenesis; LPS lipid A biosynthesis. Catalyzes the last two sequential reactions in the de novo biosynthetic pathway for UDP-N-acetylglucosamine (UDP-GlcNAc). The C-terminal domain catalyzes the transfer of acetyl group from acetyl coenzyme A to glucosamine-1-phosphate (GlcN-1-P) to produce N-acetylglucosamine-1-phosphate (GlcNAc-1-P), which is converted into UDP-GlcNAc by the transfer of uridine 5-monophosphate (from uridine 5-triphosphate), a reaction catalyzed by the N-terminal domain. The protein is Bifunctional protein GlmU of Clostridium acetobutylicum (strain ATCC 824 / DSM 792 / JCM 1419 / IAM 19013 / LMG 5710 / NBRC 13948 / NRRL B-527 / VKM B-1787 / 2291 / W).